The chain runs to 672 residues: Beta-galactosidase BgaB (672 aa).

Arginine 109 is a substrate binding site. Residue cysteine 113 participates in Zn(2+) binding. Asparagine 147 is a substrate binding site. Residue glutamate 148 is the Proton donor of the active site. Zn(2+) is bound by residues cysteine 156, cysteine 158, and cysteine 161. Glutamate 303 serves as the catalytic Nucleophile. Substrate-binding positions include tryptophan 311 and 351-354; that span reads EKFH.

Belongs to the glycosyl hydrolase 42 family.

The catalysed reaction is Hydrolysis of terminal non-reducing beta-D-galactose residues in beta-D-galactosides.. This Geobacillus sp. (strain Y412MC61) protein is Beta-galactosidase BgaB.